The sequence spans 197 residues: Holliday junction branch migration complex subunit RuvA (197 aa).

Residues 1–64 are domain I; that stretch reads MIARLAGKVA…QDAIELYGFA (64 aa). The domain II stretch occupies residues 65–141; sequence SEDEEAVFRA…LALLARAAGP (77 aa). Positions 141-145 are flexible linker; the sequence is PARAK. The tract at residues 146–197 is domain III; sequence PGAGVVEQLRQALVNLGYKPPQADAAADALRDEAEGKKLDELLREALKRLRG.

This sequence belongs to the RuvA family. As to quaternary structure, homotetramer. Forms an RuvA(8)-RuvB(12)-Holliday junction (HJ) complex. HJ DNA is sandwiched between 2 RuvA tetramers; dsDNA enters through RuvA and exits via RuvB. An RuvB hexamer assembles on each DNA strand where it exits the tetramer. Each RuvB hexamer is contacted by two RuvA subunits (via domain III) on 2 adjacent RuvB subunits; this complex drives branch migration. In the full resolvosome a probable DNA-RuvA(4)-RuvB(12)-RuvC(2) complex forms which resolves the HJ.

Its subcellular location is the cytoplasm. The RuvA-RuvB-RuvC complex processes Holliday junction (HJ) DNA during genetic recombination and DNA repair, while the RuvA-RuvB complex plays an important role in the rescue of blocked DNA replication forks via replication fork reversal (RFR). RuvA specifically binds to HJ cruciform DNA, conferring on it an open structure. The RuvB hexamer acts as an ATP-dependent pump, pulling dsDNA into and through the RuvAB complex. HJ branch migration allows RuvC to scan DNA until it finds its consensus sequence, where it cleaves and resolves the cruciform DNA. This is Holliday junction branch migration complex subunit RuvA from Anaeromyxobacter sp. (strain Fw109-5).